A 288-amino-acid chain; its full sequence is N(1)-aminopropylagmatine ureohydrolase (288 aa).

6 residues coordinate Mn(2+): His-114, Asp-133, His-135, Asp-137, Asp-213, and Asp-215.

This sequence belongs to the arginase family. Mn(2+) serves as cofactor.

The protein resides in the cytoplasm. It carries out the reaction N(1)-(3-aminopropyl)agmatine + H2O = urea + spermidine. It catalyses the reaction agmatine + H2O = urea + putrescine. It functions in the pathway amine and polyamine biosynthesis; spermidine biosynthesis. Its function is as follows. Involved in the biosynthesis of polyamines which are thought to support the growth of thermophilic microorganisms under high-temperature conditions. It seems that long-chain and branched-chain of polyamines effectively stabilize DNA and RNA, respectively. Catalyzes the decarboxylation of N1-(3-aminopropyl)agmatine to yield spermidine and urea. It can also use agmatine to yield putrescine. This is N(1)-aminopropylagmatine ureohydrolase from Thermococcus kodakarensis (strain ATCC BAA-918 / JCM 12380 / KOD1) (Pyrococcus kodakaraensis (strain KOD1)).